The sequence spans 411 residues: Mitogen-activated protein kinase 8 (411 aa).

In terms of domain architecture, Protein kinase spans 26–321 (YQNLKPIGSG…VDEALQHPYI (296 aa)). Residues 32-40 (IGSGAQGIV) and Lys-55 each bind ATP. At Cys-116 the chain carries S-nitrosocysteine; in inhibited form. Asp-151 acts as the Proton acceptor in catalysis. Position 183 is a phosphothreonine; by MAP2K7 (Thr-183). Positions 183–185 (TPY) match the TXY motif. The residue at position 185 (Tyr-185) is a Phosphotyrosine; by MAP2K4. The tract at residues 368–411 (KNGVIRGQPSPLGAAVINGSQHPVSSPSVNDMSSMSTDPTLASD) is disordered. Ser-377 is modified (phosphoserine). Residues 390–403 (PVSSPSVNDMSSMS) show a composition bias toward low complexity.

It belongs to the protein kinase superfamily. CMGC Ser/Thr protein kinase family. MAP kinase subfamily. Forms a complex with MAPK8IP1 and ARHGEF28. Found in a complex with SH3RF1, RAC1, MAP3K11/MLK3, MAP2K7/MKK7 and MAPK8IP1/JIP1. Found in a complex with SH3RF1, RAC2, MAP3K7/TAK1, MAP2K7/MKK7, MAPK8IP1/JIP1 and MAPK9/JNK2. Binds to at least four scaffolding proteins, MAPK8IP1/JIP-1, MAPK8IP2/JIP-2, MAPK8IP3/JIP-3/JSAP1 and SPAG9/MAPK8IP4/JIP-4. These proteins also bind other components of the JNK signaling pathway. Interacts with TP53, WWOX. Interacts with JAMP. Interacts with NFATC4. Interacts (phosphorylated form) with NFE2; the interaction phosphorylates NFE2 in undifferentiated cells. Interacts with MECOM; regulates JNK signaling. Interacts with PIN1; this interaction mediates MAPK8 conformational changes leading to the binding of MAPK8 to its substrates. Interacts with HSF1 (via D domain and preferentially with hyperphosphorylated form); this interaction occurs under both normal growth conditions and immediately upon heat shock. Interacts with STMN2, STMN3 and STMN4. Interacts with GRIPAP1. Interacts with POU5F1; phosphorylates POU5F1 at 'Ser-347'. Interacts with HSF4. Mg(2+) is required as a cofactor. In terms of processing, dually phosphorylated on Thr-183 and Tyr-185 by MAP2K7 and MAP2K4, which activates the enzyme. Phosphorylated by TAOK2. Phosphorylated form is more concentrated at synapses than none-phosphorylated. Post-translationally, nitrosylated upon IFN-gamma-induced endogenous NO production, which inhibits the enzyme. May be phosphorylated at Thr-183 and Tyr-185 by MAP3K1/MEKK1.

It is found in the cytoplasm. It localises to the nucleus. The protein resides in the synapse. The catalysed reaction is L-seryl-[protein] + ATP = O-phospho-L-seryl-[protein] + ADP + H(+). It catalyses the reaction L-threonyl-[protein] + ATP = O-phospho-L-threonyl-[protein] + ADP + H(+). With respect to regulation, activated by threonine and tyrosine phosphorylation by either of two dual specificity kinases, MAP2K4 and MAP2K7. MAP2K4 shows a strong preference for Tyr-185 while MAP2K7 phosphorylates Tyr-183 preferentially. Inhibited by dual specificity phosphatases, such as DUSP1. Inhibited by SERPINB3. Inhibited by IFN-gamma-induced S-nitrosylation. Its function is as follows. Serine/threonine-protein kinase involved in various processes such as cell proliferation, differentiation, migration, transformation and programmed cell death. Extracellular stimuli such as pro-inflammatory cytokines or physical stress stimulate the stress-activated protein kinase/c-Jun N-terminal kinase (SAP/JNK) signaling pathway. In this cascade, two dual specificity kinases MAP2K4/MKK4 and MAP2K7/MKK7 phosphorylate and activate MAPK8/JNK1. In turn, MAPK8/JNK1 phosphorylates a number of transcription factors, primarily components of AP-1 such as JUN, JDP2 and ATF2 and thus regulates AP-1 transcriptional activity. Phosphorylates the replication licensing factor CDT1, inhibiting the interaction between CDT1 and the histone H4 acetylase HBO1 to replication origins. Loss of this interaction abrogates the acetylation required for replication initiation. Promotes stressed cell apoptosis by phosphorylating key regulatory factors including p53/TP53 and Yes-associates protein YAP1. In T-cells, MAPK8 and MAPK9 are required for polarized differentiation of T-helper cells into Th1 cells. Contributes to the survival of erythroid cells by phosphorylating the antagonist of cell death BAD upon EPO stimulation. Mediates starvation-induced BCL2 phosphorylation, BCL2 dissociation from BECN1, and thus activation of autophagy. Phosphorylates STMN2 and hence regulates microtubule dynamics, controlling neurite elongation in cortical neurons. In the developing brain, through its cytoplasmic activity on STMN2, negatively regulates the rate of exit from multipolar stage and of radial migration from the ventricular zone. Phosphorylates several other substrates including heat shock factor protein 4 (HSF4), the deacetylase SIRT1, ELK1, or the E3 ligase ITCH. Phosphorylates the CLOCK-BMAL1 heterodimer and plays a role in the regulation of the circadian clock. Phosphorylates the heat shock transcription factor HSF1, suppressing HSF1-induced transcriptional activity. Phosphorylates POU5F1, which results in the inhibition of POU5F1's transcriptional activity and enhances its proteasomal degradation. Phosphorylates JUND and this phosphorylation is inhibited in the presence of MEN1. In neurons, phosphorylates SYT4 which captures neuronal dense core vesicles at synapses. Phosphorylates EIF4ENIF1/4-ET in response to oxidative stress, promoting P-body assembly. Phosphorylates SIRT6 in response to oxidative stress, stimulating its mono-ADP-ribosyltransferase activity. Phosphorylates NLRP3, promoting assembly of the NLRP3 inflammasome. Phosphorylates ALKBH5 in response to reactive oxygen species (ROS), promoting ALKBH5 sumoylation and inactivation. This is Mitogen-activated protein kinase 8 (Mapk8) from Rattus norvegicus (Rat).